We begin with the raw amino-acid sequence, 294 residues long: Shikimate dehydrogenase (NADP(+)) (294 aa).

Residues 23-25 and Thr76 each bind shikimate; that span reads SRS. Catalysis depends on Lys80, which acts as the Proton acceptor. Asn101 and Asp116 together coordinate shikimate. NADP(+)-binding positions include 141-145 and Met233; that span reads GAGGA. Residue Tyr235 participates in shikimate binding. Residue Gly256 coordinates NADP(+).

This sequence belongs to the shikimate dehydrogenase family. As to quaternary structure, homodimer.

The enzyme catalyses shikimate + NADP(+) = 3-dehydroshikimate + NADPH + H(+). The protein operates within metabolic intermediate biosynthesis; chorismate biosynthesis; chorismate from D-erythrose 4-phosphate and phosphoenolpyruvate: step 4/7. Involved in the biosynthesis of the chorismate, which leads to the biosynthesis of aromatic amino acids. Catalyzes the reversible NADPH linked reduction of 3-dehydroshikimate (DHSA) to yield shikimate (SA). The protein is Shikimate dehydrogenase (NADP(+)) of Methylibium petroleiphilum (strain ATCC BAA-1232 / LMG 22953 / PM1).